The sequence spans 429 residues: 3-phosphoshikimate 1-carboxyvinyltransferase (429 aa).

K11, S12, and R16 together coordinate 3-phosphoshikimate. K11 contacts phosphoenolpyruvate. Phosphoenolpyruvate-binding residues include G82 and R110. Residues S155, Q157, D302, and K329 each coordinate 3-phosphoshikimate. Q157 is a phosphoenolpyruvate binding site. D302 acts as the Proton acceptor in catalysis. The phosphoenolpyruvate site is built by R333 and R385.

The protein belongs to the EPSP synthase family. In terms of assembly, monomer.

The protein localises to the cytoplasm. It carries out the reaction 3-phosphoshikimate + phosphoenolpyruvate = 5-O-(1-carboxyvinyl)-3-phosphoshikimate + phosphate. Its pathway is metabolic intermediate biosynthesis; chorismate biosynthesis; chorismate from D-erythrose 4-phosphate and phosphoenolpyruvate: step 6/7. Its function is as follows. Catalyzes the transfer of the enolpyruvyl moiety of phosphoenolpyruvate (PEP) to the 5-hydroxyl of shikimate-3-phosphate (S3P) to produce enolpyruvyl shikimate-3-phosphate and inorganic phosphate. The protein is 3-phosphoshikimate 1-carboxyvinyltransferase of Helicobacter pylori (strain HPAG1).